The chain runs to 425 residues: Gamma-glutamyl phosphate reductase (425 aa).

This sequence belongs to the gamma-glutamyl phosphate reductase family.

The protein resides in the cytoplasm. The enzyme catalyses L-glutamate 5-semialdehyde + phosphate + NADP(+) = L-glutamyl 5-phosphate + NADPH + H(+). Its pathway is amino-acid biosynthesis; L-proline biosynthesis; L-glutamate 5-semialdehyde from L-glutamate: step 2/2. Its function is as follows. Catalyzes the NADPH-dependent reduction of L-glutamate 5-phosphate into L-glutamate 5-semialdehyde and phosphate. The product spontaneously undergoes cyclization to form 1-pyrroline-5-carboxylate. This Symbiobacterium thermophilum (strain DSM 24528 / JCM 14929 / IAM 14863 / T) protein is Gamma-glutamyl phosphate reductase.